The primary structure comprises 674 residues: DNA-directed RNA polymerase subunit beta' (674 aa).

Positions 69, 71, 87, and 90 each coordinate Zn(2+). Mg(2+) contacts are provided by D494, D496, and D498.

Belongs to the RNA polymerase beta' chain family. RpoC1 subfamily. In terms of assembly, in plastids the minimal PEP RNA polymerase catalytic core is composed of four subunits: alpha, beta, beta', and beta''. When a (nuclear-encoded) sigma factor is associated with the core the holoenzyme is formed, which can initiate transcription. Mg(2+) is required as a cofactor. The cofactor is Zn(2+).

The protein resides in the plastid. Its subcellular location is the chloroplast. The enzyme catalyses RNA(n) + a ribonucleoside 5'-triphosphate = RNA(n+1) + diphosphate. DNA-dependent RNA polymerase catalyzes the transcription of DNA into RNA using the four ribonucleoside triphosphates as substrates. This Psilotum nudum (Whisk fern) protein is DNA-directed RNA polymerase subunit beta'.